Reading from the N-terminus, the 251-residue chain is Putative integrase/recombinase y4eF (251 aa).

Positions 1–40 (MLGREDIRTYQVYLANEKKLAPGSIHIALSALRFFFNVTL) constitute a Core-binding (CB) domain. Residues 58-231 (KLPIILSPDE…ATNKVCATES (174 aa)) form the Tyr recombinase domain. Residues Arg93, Lys118, His183, Arg186, and His209 contribute to the active site. Tyr218 functions as the O-(3'-phospho-DNA)-tyrosine intermediate in the catalytic mechanism.

This sequence belongs to the 'phage' integrase family.

The chain is Putative integrase/recombinase y4eF from Sinorhizobium fredii (strain NBRC 101917 / NGR234).